The chain runs to 138 residues: Spermatid nuclear transition protein 4 (138 aa).

Over residues 1–11 (AKVSRKPREPR) the composition is skewed to basic and acidic residues. The interval 1 to 138 (AKVSRKPREP…QGVTRRGRRY (138 aa)) is disordered. Serine 4 bears the Phosphoserine; by PKC mark. A Nuclear localization signal motif is present at residues 5–23 (RKPREPRTAVTQSTRRIKR). Basic residues-rich tracts occupy residues 19–34 (RRIKRKKTLSKPRSRG), 43–57 (MKIKRALRRNLRRKI), and 65–74 (KKAKKARKHF). Threonine 26 bears the Phosphothreonine; by PKA mark. The short motif at 54–72 (RRKIQTSAGQPKKAKKARK) is the Nuclear localization signal element. The span at 86–101 (NKKTNQNKRQNQNKRQ) shows a compositional bias: low complexity. The segment covering 120 to 131 (PTTSCKWCSQGV) has biased composition (polar residues).

The protein localises to the nucleus. It localises to the chromosome. In terms of biological role, involved in nuclear basic protein transition: histones are replaced by spermatid specific proteins which are themselves replaced by protamines in late spermatids. This chain is Spermatid nuclear transition protein 4 (TNP4), found in Sus scrofa (Pig).